A 510-amino-acid polypeptide reads, in one-letter code: Rab proteins geranylgeranyltransferase component A 1 (510 aa).

This sequence belongs to the Rab GDI family. In terms of assembly, may interact with rab-5, rab-7 and rab-11. Does not interact with rab-3, rab-27 and rab-10. As to expression, expressed in several neurons including head neurons, motor neurons located in the ventral nerve cord, HSN and CAN neurons, and tail neurons, and in muscles such as body-wall, pharyngeal, intestinal and anal sphincter. Also expressed in seam cells, the hypodermis and the intestine.

It localises to the cytoplasm. Substrate-binding subunit of the Rab geranylgeranyltransferase (GGTase) complex. Binds unprenylated Rab proteins and presents the substrate peptide to the catalytic component B and remains bound to it after the geranylgeranyl transfer reaction. The component A is thought to be regenerated by transferring its prenylated Rab back to the donor membrane. Plays a role in neurotransmitter release from presynaptic terminals at neuromuscular junctions. Positively regulates the function of rab-27 in synaptic transmission most likely through mediating rab-27 prenylation. The protein is Rab proteins geranylgeranyltransferase component A 1 of Caenorhabditis elegans.